The chain runs to 440 residues: tRNA-2-methylthio-N(6)-dimethylallyladenosine synthase (440 aa).

One can recognise an MTTase N-terminal domain in the interval 5–121 (KKLYIKTYGC…LPEMEAKAGT (117 aa)). [4Fe-4S] cluster is bound by residues cysteine 14, cysteine 50, cysteine 84, cysteine 159, cysteine 163, and cysteine 166. In terms of domain architecture, Radical SAM core spans 145–378 (AKRGPTAFLT…LTRQQREVQD (234 aa)). Residues 378–440 (DSMVGRELGV…ANSLAGELID (63 aa)) form the TRAM domain.

It belongs to the methylthiotransferase family. MiaB subfamily. In terms of assembly, monomer. [4Fe-4S] cluster serves as cofactor.

The protein resides in the cytoplasm. The enzyme catalyses N(6)-dimethylallyladenosine(37) in tRNA + (sulfur carrier)-SH + AH2 + 2 S-adenosyl-L-methionine = 2-methylsulfanyl-N(6)-dimethylallyladenosine(37) in tRNA + (sulfur carrier)-H + 5'-deoxyadenosine + L-methionine + A + S-adenosyl-L-homocysteine + 2 H(+). Its function is as follows. Catalyzes the methylthiolation of N6-(dimethylallyl)adenosine (i(6)A), leading to the formation of 2-methylthio-N6-(dimethylallyl)adenosine (ms(2)i(6)A) at position 37 in tRNAs that read codons beginning with uridine. The protein is tRNA-2-methylthio-N(6)-dimethylallyladenosine synthase of Ruegeria sp. (strain TM1040) (Silicibacter sp.).